The chain runs to 357 residues: Olfactory receptor 2B2 (357 aa).

The Extracellular segment spans residues 1–25 (MNWVNKSVPQEFILLVFSDQPWLEI). N-linked (GlcNAc...) asparagine glycosylation occurs at Asn5. Residues 26–49 (PPFVMFLFSYILTIFGNLTIILVS) traverse the membrane as a helical segment. Residues 50 to 57 (HVDFKLHT) are Cytoplasmic-facing. Residues 58–79 (PMYFFLSNLSLLDLCYTTSTVP) form a helical membrane-spanning segment. The Extracellular segment spans residues 80 to 100 (QMLVNICNTRKVISYGGCVAQ). Cys97 and Cys189 are disulfide-bonded. The chain crosses the membrane as a helical span at residues 101-120 (LFIFLALGSTECLLLAVMCF). The Cytoplasmic portion of the chain corresponds to 121–139 (DRFVAICRPLHYSIIMHQR). A helical membrane pass occupies residues 140–158 (LCFQLAAASWISGFSNSVL). The Extracellular portion of the chain corresponds to 159 to 195 (QSTWTLKMPLCGHKEVDHFFCEVPALLKLSCVDTTAN). The chain crosses the membrane as a helical span at residues 196–219 (EAELFFISVLFLLIPVTLILISYA). At 220–236 (FIVQAVLRIQSAEGQRK) the chain is on the cytoplasmic side. A helical transmembrane segment spans residues 237 to 259 (AFGTCGSHLIVVSLFYGTAISMY). The Extracellular portion of the chain corresponds to 260–272 (LQPPSPSSKDRGK). A helical transmembrane segment spans residues 273–292 (MVSLFCGIIAPMLNPLIYTL). Over 293 to 357 (RNKEVKEAFK…YCNLPQRKFP (65 aa)) the chain is Cytoplasmic.

Belongs to the G-protein coupled receptor 1 family.

The protein localises to the cell membrane. Functionally, odorant receptor. This Homo sapiens (Human) protein is Olfactory receptor 2B2 (OR2B2).